A 293-amino-acid polypeptide reads, in one-letter code: 33 kDa chaperonin (293 aa).

Intrachain disulfides connect cysteine 237–cysteine 239 and cysteine 271–cysteine 274.

Belongs to the HSP33 family. In terms of processing, under oxidizing conditions two disulfide bonds are formed involving the reactive cysteines. Under reducing conditions zinc is bound to the reactive cysteines and the protein is inactive.

Its subcellular location is the cytoplasm. Functionally, redox regulated molecular chaperone. Protects both thermally unfolding and oxidatively damaged proteins from irreversible aggregation. Plays an important role in the bacterial defense system toward oxidative stress. The chain is 33 kDa chaperonin from Haemophilus influenzae (strain 86-028NP).